Consider the following 492-residue polypeptide: Catalase-4 (492 aa).

Catalysis depends on residues histidine 65 and asparagine 138. A heme-binding site is contributed by tyrosine 348.

Belongs to the catalase family. Homotetramer. It depends on heme as a cofactor.

The protein localises to the peroxisome. Its subcellular location is the glyoxysome. It carries out the reaction 2 H2O2 = O2 + 2 H2O. Occurs in almost all aerobically respiring organisms and serves to protect cells from the toxic effects of hydrogen peroxide. This Glycine max (Soybean) protein is Catalase-4 (CAT4).